The following is a 266-amino-acid chain: Isoprenyl transferase (266 aa).

Aspartate 36 is a catalytic residue. Residue aspartate 36 participates in Mg(2+) binding. Substrate-binding positions include 37-40, tryptophan 41, arginine 49, histidine 53, and 81-83; these read GNGR and STE. Residue asparagine 84 is the Proton acceptor of the active site. Residues tryptophan 85, arginine 87, arginine 204, and 210–212 contribute to the substrate site; that span reads RIS. Residue glutamate 223 coordinates Mg(2+).

This sequence belongs to the UPP synthase family. In terms of assembly, homodimer. Requires Mg(2+) as cofactor.

Catalyzes the condensation of isopentenyl diphosphate (IPP) with allylic pyrophosphates generating different type of terpenoids. The sequence is that of Isoprenyl transferase from Prochlorococcus marinus (strain SARG / CCMP1375 / SS120).